The following is a 449-amino-acid chain: Glutamyl-tRNA reductase (449 aa).

Residues 49–52 (TCNR), Ser109, 114–116 (ETQ), and Gln120 contribute to the substrate site. Residue Cys50 is the Nucleophile of the active site. 189–194 (GAGKMS) serves as a coordination point for NADP(+). The tract at residues 427-449 (NFTHPREEMEESDEKRSYCGESR) is disordered.

Belongs to the glutamyl-tRNA reductase family. Homodimer.

The catalysed reaction is (S)-4-amino-5-oxopentanoate + tRNA(Glu) + NADP(+) = L-glutamyl-tRNA(Glu) + NADPH + H(+). The protein operates within porphyrin-containing compound metabolism; protoporphyrin-IX biosynthesis; 5-aminolevulinate from L-glutamyl-tRNA(Glu): step 1/2. Functionally, catalyzes the NADPH-dependent reduction of glutamyl-tRNA(Glu) to glutamate 1-semialdehyde (GSA). The chain is Glutamyl-tRNA reductase from Carboxydothermus hydrogenoformans (strain ATCC BAA-161 / DSM 6008 / Z-2901).